The sequence spans 578 residues: Arginine--tRNA ligase (578 aa).

The 'HIGH' region motif lies at Pro127–His137.

Belongs to the class-I aminoacyl-tRNA synthetase family. As to quaternary structure, monomer.

The protein localises to the cytoplasm. It carries out the reaction tRNA(Arg) + L-arginine + ATP = L-arginyl-tRNA(Arg) + AMP + diphosphate. The sequence is that of Arginine--tRNA ligase from Pseudomonas putida (strain ATCC 700007 / DSM 6899 / JCM 31910 / BCRC 17059 / LMG 24140 / F1).